We begin with the raw amino-acid sequence, 295 residues long: Peptide transport system permease protein SapC (295 aa).

6 consecutive transmembrane segments (helical) span residues 27-47 (IALF…FASY), 102-122 (LLVV…AGLL), 129-149 (FVGH…AVVI), 157-177 (LWNA…HTIY), 219-239 (VARA…ISLG), and 262-282 (PWTV…SIIF). The 181-residue stretch at 98–278 (LGSALLVVFS…GFAIIFTILL (181 aa)) folds into the ABC transmembrane type-1 domain.

The protein belongs to the binding-protein-dependent transport system permease family. OppBC subfamily.

The protein localises to the cell inner membrane. In terms of biological role, involved in a peptide intake transport system that plays a role in the resistance to antimicrobial peptides. The polypeptide is Peptide transport system permease protein SapC (sapC) (Haemophilus influenzae (strain ATCC 51907 / DSM 11121 / KW20 / Rd)).